A 714-amino-acid polypeptide reads, in one-letter code: Fatty acid oxidation complex subunit alpha (714 aa).

The segment at 1 to 190 (MEMASAFTLN…KLGLVDDVVP (190 aa)) is enoyl-CoA hydratase. The segment at 306–714 (APLNSVGILG…FWKTTATDLQ (409 aa)) is 3-hydroxyacyl-CoA dehydrogenase.

This sequence in the N-terminal section; belongs to the enoyl-CoA hydratase/isomerase family. In the central section; belongs to the 3-hydroxyacyl-CoA dehydrogenase family. In terms of assembly, heterotetramer of two alpha chains (FadJ) and two beta chains (FadI).

The protein resides in the cytoplasm. The enzyme catalyses a (3S)-3-hydroxyacyl-CoA = a (2E)-enoyl-CoA + H2O. It carries out the reaction a 4-saturated-(3S)-3-hydroxyacyl-CoA = a (3E)-enoyl-CoA + H2O. The catalysed reaction is a (3S)-3-hydroxyacyl-CoA + NAD(+) = a 3-oxoacyl-CoA + NADH + H(+). It catalyses the reaction (3S)-3-hydroxybutanoyl-CoA = (3R)-3-hydroxybutanoyl-CoA. Its pathway is lipid metabolism; fatty acid beta-oxidation. Functionally, catalyzes the formation of a hydroxyacyl-CoA by addition of water on enoyl-CoA. Also exhibits 3-hydroxyacyl-CoA epimerase and 3-hydroxyacyl-CoA dehydrogenase activities. The polypeptide is Fatty acid oxidation complex subunit alpha (Shigella flexneri).